A 132-amino-acid chain; its full sequence is Small ribosomal subunit protein uS8c (132 aa).

Belongs to the universal ribosomal protein uS8 family. As to quaternary structure, part of the 30S ribosomal subunit.

Its subcellular location is the plastid. It localises to the chloroplast. In terms of biological role, one of the primary rRNA binding proteins, it binds directly to 16S rRNA central domain where it helps coordinate assembly of the platform of the 30S subunit. This chain is Small ribosomal subunit protein uS8c (rps8), found in Zygnema circumcarinatum (Green alga).